We begin with the raw amino-acid sequence, 98 residues long: PsbF-like protein (98 aa).

The next 2 helical transmembrane spans lie at 5–25 and 73–93; these read VLLV…WLGK and TAAV…ILAM.

The protein belongs to the PsbE/PsbF family.

Its subcellular location is the membrane. Functionally, unknown. Resembles PsbF, one of the subunits of the photosystem II reaction center. However, it encodes asparagine rather than histidine at the site PsbF uses to bind heme. This is PsbF-like protein from Prochlorococcus marinus (strain MIT 9312).